The sequence spans 478 residues: Cytochrome c-552 (478 aa).

A signal peptide spans 1-26; the sequence is MARKTLRARRFFSLIFPFFFITSVYA. Position 94 (His-94) interacts with heme c. Heme is bound by residues Cys-122, Cys-125, and Lys-126. Heme c contacts are provided by Cys-160, Cys-163, His-164, Cys-209, Cys-212, and His-213. 4 residues coordinate Ca(2+): Glu-215, Tyr-216, Lys-261, and Gln-263. Substrate is bound at residue Tyr-216. Position 264 (His-264) interacts with substrate. Residues His-275, Cys-282, Cys-285, His-286, His-301, Cys-314, Cys-317, His-318, and His-393 each contribute to the heme c site.

This sequence belongs to the cytochrome c-552 family. Ca(2+) is required as a cofactor. Heme c serves as cofactor.

The protein localises to the periplasm. The enzyme catalyses 6 Fe(III)-[cytochrome c] + NH4(+) + 2 H2O = 6 Fe(II)-[cytochrome c] + nitrite + 8 H(+). It participates in nitrogen metabolism; nitrate reduction (assimilation). Catalyzes the reduction of nitrite to ammonia, consuming six electrons in the process. This chain is Cytochrome c-552, found in Salmonella dublin (strain CT_02021853).